The sequence spans 110 residues: Phosphoribosyl-AMP cyclohydrolase (110 aa).

Aspartate 74 is a Mg(2+) binding site. Cysteine 75 is a Zn(2+) binding site. 2 residues coordinate Mg(2+): aspartate 76 and aspartate 78. Positions 91 and 98 each coordinate Zn(2+).

Belongs to the PRA-CH family. In terms of assembly, homodimer. The cofactor is Mg(2+). Requires Zn(2+) as cofactor.

Its subcellular location is the cytoplasm. It carries out the reaction 1-(5-phospho-beta-D-ribosyl)-5'-AMP + H2O = 1-(5-phospho-beta-D-ribosyl)-5-[(5-phospho-beta-D-ribosylamino)methylideneamino]imidazole-4-carboxamide. The protein operates within amino-acid biosynthesis; L-histidine biosynthesis; L-histidine from 5-phospho-alpha-D-ribose 1-diphosphate: step 3/9. Catalyzes the hydrolysis of the adenine ring of phosphoribosyl-AMP. This chain is Phosphoribosyl-AMP cyclohydrolase, found in Lacticaseibacillus casei (strain BL23) (Lactobacillus casei).